The primary structure comprises 540 residues: uncharacterized protein (540 aa).

A chloroplast-targeting transit peptide spans 1–58 (MAVSAFRGTRLPLFHHSQFPVARTVSGTSKKMIGARNFKGFVLTAQYSQTQDLFTSRL). Residues 195 to 533 (YVDPTPIASA…ISIASNKRTN (339 aa)) form the Protein kinase domain. Residues 201-209 (IASASIAQV) and Lys-224 contribute to the ATP site. The active-site Proton acceptor is Asp-362.

Belongs to the protein kinase superfamily. ADCK protein kinase family.

The protein resides in the plastid. It localises to the chloroplast. The protein localises to the plastoglobule. This is an uncharacterized protein from Arabidopsis thaliana (Mouse-ear cress).